Reading from the N-terminus, the 674-residue chain is Polyunsaturated fatty acid 5-lipoxygenase (674 aa).

A PLAT domain is found at 2–118 (PSYTVTVATG…EIVLRDGRAK (117 aa)). Residues Gly17, Thr18, Asp19, Asn44, Asp45, Glu47, Asp79, and Asp80 each contribute to the Ca(2+) site. Residues 119-674 (LARDDQIHIL…PDRIPNSVAI (556 aa)) form the Lipoxygenase domain. At Ser272 the chain carries Phosphoserine. Fe cation is bound by residues His368 and His373. Ser524 carries the phosphoserine modification. Residues His551, Asn555, and Ile674 each contribute to the Fe cation site.

Belongs to the lipoxygenase family. In terms of assembly, homodimer. Interacts with ALOX5AP and LTC4S. Interacts with COTL1, the interaction is required for stability and efficient catalytic activity. Interacts with PIK3R1; this interaction bridges ALOX5 with CD40 after CD40 ligation in B cells and leads to the production of reactive oxygen species (ROS). Interacts (via PLAT domain) with DICER1 (via Dicer dsRNA-binding fold domain); this interaction enhances arachidonate 5-lipoxygenase activity and modifies the miRNA precursor processing activity of DICER1. The cofactor is Fe cation. Serine phosphorylation by MAPKAPK2 is stimulated by arachidonic acid. Phosphorylation on Ser-524 by PKA has an inhibitory effect. Phosphorylation on Ser-272 prevents export from the nucleus. Phosphorylation at Ser-524 is stimulated by 8-bromo-3',5'-cyclic AMP or prostaglandin E2. In terms of tissue distribution, expressed in skin Langerhans cells and their emigrated counterparts in draining lymph nodes. Highly expressed in circulating leukocytes.

The protein resides in the cytoplasm. It is found in the nucleus matrix. It localises to the nucleus membrane. The protein localises to the perinuclear region. Its subcellular location is the cytosol. The protein resides in the nucleus envelope. It is found in the nucleus intermembrane space. It carries out the reaction (5Z,8Z,11Z,14Z)-eicosatetraenoate + O2 = (5S)-hydroperoxy-(6E,8Z,11Z,14Z)-eicosatetraenoate. The catalysed reaction is (5Z,8Z,11Z,14Z)-eicosatetraenoate + O2 = leukotriene A4 + H2O. The enzyme catalyses (5Z,8Z,11Z,14Z)-eicosatetraenoate + O2 = (8S)-hydroperoxy-(5Z,9E,11Z,14Z)-eicosatetraenoate. It catalyses the reaction (5Z,8Z,11Z,14Z)-eicosatetraenoate + O2 = (12S)-hydroperoxy-(5Z,8Z,10E,14Z)-eicosatetraenoate. It carries out the reaction 18-HEPE + O2 = (5S)-hydroperoxy-18-hydroxy-(7E,9E,11Z,14Z,16E)-eicosapentaenoate. The catalysed reaction is (18R)-hydroxy-(5Z,8Z,11Z,14Z,16E)-eicosapentaenoate + O2 = (5S)-hydroperoxy-(18R)-hydroxy-(6E,8Z,11Z,14Z,16E)-eicosapentaenoate. The enzyme catalyses (18S)-hydroxy-(5Z,8Z,11Z,14Z,16E)-eicosapentaenoate + O2 = (5S)-hydroperoxy-(18S)-hydroxy-(6E,8Z,11Z,14Z,16E)-eicosapentaenoate. It catalyses the reaction (5S)-hydroperoxy-(18S)-hydroxy-(6E,8Z,11Z,14Z,16E)-eicosapentaenoate = (5S,6S)-epoxy-(18S)-hydroxy-(7E,9E,11Z,14Z,16E)-eicosapentaenoate + H2O. It carries out the reaction (5S)-hydroperoxy-(18R)-hydroxy-(6E,8Z,11Z,14Z,16E)-eicosapentaenoate = (5S,6S)-epoxy-(18R)-hydroxy-(7E,9E,11Z,14Z,16E)-eicosapentaenoate + H2O. The catalysed reaction is (5S)-hydroperoxy-18-hydroxy-(7E,9E,11Z,14Z,16E)-eicosapentaenoate = (5S,6S)-epoxy-18-hydroxy-(7E,9E,11Z,14Z,16E)-eicosapentaenoate + H2O. The enzyme catalyses (15S)-hydroxy-(5Z,8Z,11Z,13E)-eicosatetraenoate + O2 = (5S)-hydroperoxy-(15S)-hydroxy-(6E,8Z,11Z,13E)-eicosatetraenoate. It catalyses the reaction (5S)-hydroperoxy-(6E,8Z,11Z,14Z)-eicosatetraenoate = leukotriene A4 + H2O. It carries out the reaction (5Z,8Z)-eicosadienoate + O2 = (5S)-hydroperoxy-(6E,8Z)-eicosadienoate. The catalysed reaction is (12S)-hydroxy-(5Z,8Z,10E,14Z)-eicosatetraenoate + O2 = (5S)-hydroperoxy-(12S)-hydroxy-(6E,8Z,10E,14Z)-eicosatetraenoate. The enzyme catalyses (5Z,8Z,11Z,14Z,17Z)-eicosapentaenoate + O2 = 5-hydroperoxy-(6E,8Z,11Z,14Z,17Z)-eicosapentaenoate. It catalyses the reaction (4Z,7Z,10Z,13Z,16Z,19Z)-docosahexaenoate + O2 = (14S)-hydroperoxy-(4Z,7Z,10Z,12E,16Z,19Z)-docosahexaenoate. It carries out the reaction (4Z,7Z,10Z,13Z,16Z,19Z)-docosahexaenoate + O2 = (7S)-hydroperoxy-(4Z,8E,10Z,13Z,16Z,19Z)-docosahexaenoate. The catalysed reaction is (4Z,7Z,10Z,13Z,16Z,19Z)-docosahexaenoate + O2 = (17S)-hydroperoxy-(4Z,7Z,10Z,13Z,15E,19Z)-docosahexaenoate. It functions in the pathway lipid metabolism; leukotriene A4 biosynthesis. Functionally, catalyzes the oxygenation of arachidonate to 5-hydroperoxyeicosatetraenoate (5-HPETE) followed by the dehydration to 5,6- epoxyeicosatetraenoate (Leukotriene A4/LTA4), the first two steps in the biosynthesis of leukotrienes, which are potent mediators of inflammation. Also catalyzes the oxygenation of arachidonic acid into 8-hydroperoxyicosatetraenoic acid (8-HPETE) and 12-hydroperoxyicosatetraenoic acid (12-HPETE). Displays lipoxin synthase activity being able to convert (15S)-HETE into a conjugate tetraene. Although arachidonate is the preferred substrate, this enzyme can also metabolize oxidized fatty acids derived from arachidonate such as (15S)-HETE, eicosapentaenoate (EPA) such as (18R)- and (18S)-HEPE or docosahexaenoate (DHA) which lead to the formation of specialized pro-resolving mediators (SPM) lipoxin and resolvins E and D respectively, therefore it participates in anti-inflammatory responses. Oxidation of DHA directly inhibits endothelial cell proliferation and sprouting angiogenesis via peroxisome proliferator-activated receptor gamma (PPARgamma). It does not catalyze the oxygenation of linoleic acid and does not convert (5S)-HETE to lipoxin isomers. In addition to inflammatory processes, participates in dendritic cell migration, wound healing through an antioxidant mechanism based on heme oxygenase-1 (HO-1) regulation expression, monocyte adhesion to the endothelium via ITGAM expression on monocytes. Moreover, it helps establish an adaptive humoral immunity by regulating primary resting B cells and follicular helper T cells and participates in the CD40-induced production of reactive oxygen species (ROS) after CD40 ligation in B cells through interaction with PIK3R1 that bridges ALOX5 with CD40. May also play a role in glucose homeostasis, regulation of insulin secretion and palmitic acid-induced insulin resistance via AMPK. Can regulate bone mineralization and fat cell differentiation increases in induced pluripotent stem cells. This Mus musculus (Mouse) protein is Polyunsaturated fatty acid 5-lipoxygenase.